Consider the following 201-residue polypeptide: Arachin 25 kDa protein (201 aa).

In terms of assembly, this is one of six apparently different protein chains that constitute the peanut protein arachin.

This Arachis hypogaea (Peanut) protein is Arachin 25 kDa protein.